The primary structure comprises 506 residues: Bone morphogenetic protein 6 (506 aa).

The first 20 residues, 1-20 (MPGLGRRAQWLCWWWGLLCS), serve as a signal peptide directing secretion. Residues 21–367 (CGPPPLRPPL…VSEVHVRTTR (347 aa)) constitute a propeptide that is removed on maturation. Disordered stretches follow at residues 44–64 (AGGS…SGFL), 87–125 (PHRP…RLKS), and 139–195 (KDDE…PLTS). Residues 96–112 (LQQPQSPVLPQQQQSQQ) show a composition bias toward low complexity. Residues 140–153 (DDEEDGVSEGEGLE) show a composition bias toward acidic residues. Residues Asn-234, Asn-262, Asn-379, Asn-397, and Asn-447 are each glycosylated (N-linked (GlcNAc...) asparagine). The segment at 366–397 (TRSASSRRRQQSRNRSTQSQDVSRGSSASDYN) is disordered. The segment covering 386 to 397 (DVSRGSSASDYN) has biased composition (polar residues). Disulfide bonds link Cys-405–Cys-471, Cys-434–Cys-503, and Cys-438–Cys-505.

The protein belongs to the TGF-beta family. In terms of assembly, interacts with SOSTDC1. Interacts (when glycosylated) with type I receptor ACVR1; the interaction may induce HAMP expression. Interacts with type II receptor ACVR2B. Interacts with Hemojuvelin/HJV. Interacts with ERFE; the interaction inhibits BMP-induced transcription of HAMP. Interacts with BMPR1A/ALK3. Forms heterodimers with BMP2 in vitro; the heterodimer then binds to its receptor BMPR1A /ALK3 and may induce HAMP expression.

The protein resides in the secreted. Its function is as follows. Growth factor of the TGF-beta superfamily that plays essential roles in many developmental processes including cartilage and bone formation. Also plays an important role in the regulation of HAMP/hepcidin expression and iron metabolism by acting as a ligand for hemojuvelin/HJV. Also acts to promote expression of HAMP, potentially via the interaction with its receptor BMPR1A/ALK3. Initiates the canonical BMP signaling cascade by associating with type I receptor ACVR1 and type II receptor ACVR2B. In turn, ACVR1 propagates signal by phosphorylating SMAD1/5/8 that travel to the nucleus and act as activators and repressors of transcription of target. Can also signal through non-canonical pathway such as TAZ-Hippo signaling cascade to modulate VEGF signaling by regulating VEGFR2 expression. This chain is Bone morphogenetic protein 6 (Bmp6), found in Rattus norvegicus (Rat).